Reading from the N-terminus, the 413-residue chain is Probable tRNA pseudouridine synthase D (413 aa).

The Nucleophile role is filled by Asp97. Positions 167–370 constitute a TRUD domain; that stretch reads AAPNYYGYQR…YGTYRRVRLE (204 aa).

It belongs to the pseudouridine synthase TruD family.

The catalysed reaction is uridine(13) in tRNA = pseudouridine(13) in tRNA. Its function is as follows. Could be responsible for synthesis of pseudouridine from uracil-13 in transfer RNAs. This Pyrobaculum aerophilum (strain ATCC 51768 / DSM 7523 / JCM 9630 / CIP 104966 / NBRC 100827 / IM2) protein is Probable tRNA pseudouridine synthase D.